Here is a 166-residue protein sequence, read N- to C-terminus: NAD(P)H-quinone oxidoreductase subunit I, chloroplastic (166 aa).

4Fe-4S ferredoxin-type domains follow at residues 55-84 (GRIH…VDWK) and 95-124 (LNYS…MTEE). Cys-64, Cys-67, Cys-70, Cys-74, Cys-104, Cys-107, Cys-110, and Cys-114 together coordinate [4Fe-4S] cluster.

It belongs to the complex I 23 kDa subunit family. NDH is composed of at least 16 different subunits, 5 of which are encoded in the nucleus. The cofactor is [4Fe-4S] cluster.

It is found in the plastid. The protein resides in the chloroplast thylakoid membrane. The catalysed reaction is a plastoquinone + NADH + (n+1) H(+)(in) = a plastoquinol + NAD(+) + n H(+)(out). The enzyme catalyses a plastoquinone + NADPH + (n+1) H(+)(in) = a plastoquinol + NADP(+) + n H(+)(out). In terms of biological role, NDH shuttles electrons from NAD(P)H:plastoquinone, via FMN and iron-sulfur (Fe-S) centers, to quinones in the photosynthetic chain and possibly in a chloroplast respiratory chain. The immediate electron acceptor for the enzyme in this species is believed to be plastoquinone. Couples the redox reaction to proton translocation, and thus conserves the redox energy in a proton gradient. This is NAD(P)H-quinone oxidoreductase subunit I, chloroplastic from Guardiola tulocarpus.